The primary structure comprises 258 residues: Global transcriptional regulator CodY (258 aa).

Positions 1–156 (MSTLLDKTRK…SATIVGLEIL (156 aa)) are GAF domain. Residues 204 to 223 (ASKIADKVGITRSVIVNALR) constitute a DNA-binding region (H-T-H motif).

It belongs to the CodY family.

Its subcellular location is the cytoplasm. In terms of biological role, DNA-binding global transcriptional regulator which is involved in the adaptive response to starvation and acts by directly or indirectly controlling the expression of numerous genes in response to nutrient availability. During rapid exponential growth, CodY is highly active and represses genes whose products allow adaptation to nutrient depletion. The protein is Global transcriptional regulator CodY of Clostridium kluyveri (strain NBRC 12016).